Consider the following 148-residue polypeptide: MQIILLEKVVNLGNLGDIVKVKDGYARNFLIPQRMAKRATPAAMAEFEARRAELEKLAAEKLAAAQAVADKMNGTVVTVARKAGMDGRLFGSVGNADIADALKAAGYVVDKSAVRMPEGPLKAIGEFPLDVALHTDVLANITVAIVAE.

The protein belongs to the bacterial ribosomal protein bL9 family.

Binds to the 23S rRNA. The chain is Large ribosomal subunit protein bL9 from Dechloromonas aromatica (strain RCB).